The sequence spans 193 residues: dCTP deaminase (193 aa).

DCTP-binding positions include 110-115 (RSSLAR), Asp128, 136-138 (VLE), Tyr171, Lys178, and Gln182. Residue Glu138 is the Proton donor/acceptor of the active site. The interval 169 to 193 (RPYNRREDAKYRNQQGAVASRIDKD) is disordered.

The protein belongs to the dCTP deaminase family. Homotrimer.

The catalysed reaction is dCTP + H2O + H(+) = dUTP + NH4(+). It participates in pyrimidine metabolism; dUMP biosynthesis; dUMP from dCTP (dUTP route): step 1/2. In terms of biological role, catalyzes the deamination of dCTP to dUTP. This Escherichia coli O8 (strain IAI1) protein is dCTP deaminase.